A 677-amino-acid polypeptide reads, in one-letter code: Methionine--tRNA ligase (677 aa).

A 'HIGH' region motif is present at residues 15–25 (PYANGSIHLGH). Zn(2+) is bound by residues cysteine 146, cysteine 149, cysteine 159, and cysteine 162. Residues 333 to 337 (KMSKS) carry the 'KMSKS' region motif. Residue lysine 336 participates in ATP binding. The tRNA-binding domain occupies 575–677 (DFAKVDLRVA…AGAKPGHQVK (103 aa)).

This sequence belongs to the class-I aminoacyl-tRNA synthetase family. MetG type 1 subfamily. As to quaternary structure, homodimer. Zn(2+) serves as cofactor.

It localises to the cytoplasm. The catalysed reaction is tRNA(Met) + L-methionine + ATP = L-methionyl-tRNA(Met) + AMP + diphosphate. Is required not only for elongation of protein synthesis but also for the initiation of all mRNA translation through initiator tRNA(fMet) aminoacylation. The protein is Methionine--tRNA ligase of Escherichia coli O127:H6 (strain E2348/69 / EPEC).